Reading from the N-terminus, the 192-residue chain is Adenylate kinase (192 aa).

Residue Gly-10–Thr-18 participates in ATP binding.

This sequence belongs to the archaeal adenylate kinase family. In terms of assembly, monomer.

The protein localises to the cytoplasm. The catalysed reaction is AMP + ATP = 2 ADP. The chain is Adenylate kinase from Methanococcus maripaludis (strain C5 / ATCC BAA-1333).